Here is a 176-residue protein sequence, read N- to C-terminus: Phosphopantetheine adenylyltransferase (176 aa).

Threonine 11 serves as a coordination point for substrate. ATP-binding positions include 11–12 and histidine 19; that span reads TF. Substrate is bound by residues lysine 43, leucine 93, and arginine 107. Residues glutamate 117 and 141-147 contribute to the ATP site; that span reads LSVVSSS.

This sequence belongs to the bacterial CoaD family. Homohexamer. Mg(2+) serves as cofactor.

It is found in the cytoplasm. It carries out the reaction (R)-4'-phosphopantetheine + ATP + H(+) = 3'-dephospho-CoA + diphosphate. It functions in the pathway cofactor biosynthesis; coenzyme A biosynthesis; CoA from (R)-pantothenate: step 4/5. Reversibly transfers an adenylyl group from ATP to 4'-phosphopantetheine, yielding dephospho-CoA (dPCoA) and pyrophosphate. The polypeptide is Phosphopantetheine adenylyltransferase (Tropheryma whipplei (strain TW08/27) (Whipple's bacillus)).